Consider the following 26-residue polypeptide: Ribulose bisphosphate carboxylase large chain (26 aa).

The propeptide occupies 1–2 (MS). Proline 3 carries the post-translational modification N-acetylproline.

This sequence belongs to the RuBisCO large chain family. Type I subfamily. In terms of assembly, heterohexadecamer of 8 large chains and 8 small chains.

It localises to the plastid. The protein localises to the chloroplast. It catalyses the reaction 2 (2R)-3-phosphoglycerate + 2 H(+) = D-ribulose 1,5-bisphosphate + CO2 + H2O. It carries out the reaction D-ribulose 1,5-bisphosphate + O2 = 2-phosphoglycolate + (2R)-3-phosphoglycerate + 2 H(+). RuBisCO catalyzes two reactions: the carboxylation of D-ribulose 1,5-bisphosphate, the primary event in carbon dioxide fixation, as well as the oxidative fragmentation of the pentose substrate in the photorespiration process. Both reactions occur simultaneously and in competition at the same active site. This is Ribulose bisphosphate carboxylase large chain (rbcL) from Vicia faba (Broad bean).